A 232-amino-acid polypeptide reads, in one-letter code: Orotidine 5'-phosphate decarboxylase (232 aa).

Substrate contacts are provided by residues D13, K35, 62 to 71, T122, R182, Q191, G211, and R212; that span reads DLKFHDIPNT. The Proton donor role is filled by K64.

This sequence belongs to the OMP decarboxylase family. Type 1 subfamily. As to quaternary structure, homodimer.

It carries out the reaction orotidine 5'-phosphate + H(+) = UMP + CO2. It participates in pyrimidine metabolism; UMP biosynthesis via de novo pathway; UMP from orotate: step 2/2. In terms of biological role, catalyzes the decarboxylation of orotidine 5'-monophosphate (OMP) to uridine 5'-monophosphate (UMP). The chain is Orotidine 5'-phosphate decarboxylase from Pseudomonas syringae pv. syringae (strain B728a).